Reading from the N-terminus, the 330-residue chain is uncharacterized protein (330 aa).

Residues 2–22 (IKPIYLIIIGTVICLVILYYF) traverse the membrane as a helical segment. N-linked (GlcNAc...) asparagine; by host glycosylation is found at Asn-72, Asn-94, Asn-234, and Asn-315.

Its subcellular location is the membrane. This is an uncharacterized protein from Acanthamoeba polyphaga mimivirus (APMV).